Here is a 199-residue protein sequence, read N- to C-terminus: Protein GrpE (199 aa).

The span at 1–24 shows a compositional bias: basic and acidic residues; the sequence is MSKQNKKDWKKFRDEHKEEHKVEN. The disordered stretch occupies residues 1-52; sequence MSKQNKKDWKKFRDEHKEEHKVENEILEEETDEESQHQEPALGHPSYTALEE.

This sequence belongs to the GrpE family. In terms of assembly, homodimer.

The protein resides in the cytoplasm. In terms of biological role, participates actively in the response to hyperosmotic and heat shock by preventing the aggregation of stress-denatured proteins, in association with DnaK and GrpE. It is the nucleotide exchange factor for DnaK and may function as a thermosensor. Unfolded proteins bind initially to DnaJ; upon interaction with the DnaJ-bound protein, DnaK hydrolyzes its bound ATP, resulting in the formation of a stable complex. GrpE releases ADP from DnaK; ATP binding to DnaK triggers the release of the substrate protein, thus completing the reaction cycle. Several rounds of ATP-dependent interactions between DnaJ, DnaK and GrpE are required for fully efficient folding. This is Protein GrpE from Legionella pneumophila (strain Lens).